A 1551-amino-acid polypeptide reads, in one-letter code: Dual oxidase 1 (1551 aa).

The signal sequence occupies residues 1–21 (MGFCLALTWTFLVGSWTSMGA). Over 22 to 596 (QKPISWEVQR…YFEGSGFGFG (575 aa)) the chain is Extracellular. The segment at 26–593 (SWEVQRFDGW…MQDYFEGSGF (568 aa)) is peroxidase-like; mediates peroxidase activity. Asparagine 94 is a glycosylation site (N-linked (GlcNAc...) asparagine). Positions 197-222 (LASGPDPAFPRNAQPPLLMWSAPDPA) are disordered. N-linked (GlcNAc...) asparagine glycans are attached at residues asparagine 342, asparagine 354, asparagine 461, and asparagine 534. A helical transmembrane segment spans residues 597–617 (VTIGTLCCFPLVSLLSAWIVA). Topologically, residues 618-1044 (RLRKKNFKKL…KRFIENYRRH (427 aa)) are cytoplasmic. 3 EF-hand domains span residues 815 to 850 (PQDMFVESMFSLADKDGNGYLSFREFLDILVVFMKG), 851 to 886 (SPEEKSRLMFRMYDFDGNGLISKDEFIRMLRSFIEI), and 895 to 930 (QLTEVVESMFRESGFQDKEELTWEDFHFMLRDHDSE). Aspartate 828, aspartate 830, asparagine 832, tyrosine 834, glutamate 839, aspartate 864, aspartate 866, asparagine 868, and glutamate 875 together coordinate Ca(2+). An interaction with TXNDC11 region spans residues 956 to 1248 (YISQEKICPS…GSFGLIQLPR (293 aa)). A helical transmembrane segment spans residues 1045–1065 (IGCVAVFYAITGGLFLERAYY). The Extracellular segment spans residues 1066 to 1080 (YAFGAHHMGITDTTR). The chain crosses the membrane as a helical span at residues 1081 to 1101 (VGIILSRGTAASISFMFSYIL). In terms of domain architecture, Ferric oxidoreductase spans 1087–1269 (RGTAASISFM…YVGDKLVSLS (183 aa)). At 1102-1151 (LTMCRNLITFLRETFLNRYVPFDAAVDFHRLIASTAIVLTVLHSAGHVVN) the chain is on the cytoplasmic side. The chain crosses the membrane as a helical span at residues 1152–1172 (VYLFSISPLSVLSCLFPGLFH). Residues 1173-1188 (NDGSEFPQKYYWWFFQ) are Extracellular-facing. Residues 1189-1209 (TVPGLTGVMLLLVLAIMYVFA) traverse the membrane as a helical segment. Topologically, residues 1210 to 1226 (SHHFRRHSFRGFWLTHH) are cytoplasmic. Residues 1227–1247 (LYILLYVLLIIHGSFGLIQLP) traverse the membrane as a helical segment. Residue arginine 1248 is a topological domain, extracellular. The helical transmembrane segment at 1249–1269 (FHIFFLVPALIYVGDKLVSLS) threads the bilayer. Residues 1270–1376 (RKKVEISVVK…DGPFGEGHQE (107 aa)) enclose the FAD-binding FR-type domain. The Cytoplasmic portion of the chain corresponds to 1270-1551 (RKKVEISVVK…THFSHHYENF (282 aa)).

In the N-terminal section; belongs to the peroxidase family. As to quaternary structure, interacts with TPO and CYBA. Interacts with TXNDC11. N-glycosylated. In terms of tissue distribution, expressed in thyrocytes (at protein level). Specifically expressed in thyroid.

It localises to the apical cell membrane. The catalysed reaction is NADH + O2 + H(+) = H2O2 + NAD(+). It carries out the reaction NADPH + O2 + H(+) = H2O2 + NADP(+). It functions in the pathway hormone biosynthesis; thyroid hormone biosynthesis. With respect to regulation, peroxidase activity is inhibited by aminobenzohydrazide. The NADPH oxidase activity is calcium-dependent. Generates hydrogen peroxide which is required for the activity of thyroid peroxidase/TPO and lactoperoxidase/LPO. Plays a role in thyroid hormones synthesis and lactoperoxidase-mediated antimicrobial defense at the surface of mucosa. May have its own peroxidase activity through its N-terminal peroxidase-like domain. The polypeptide is Dual oxidase 1 (DUOX1) (Canis lupus familiaris (Dog)).